We begin with the raw amino-acid sequence, 514 residues long: 2,3-bisphosphoglycerate-independent phosphoglycerate mutase (514 aa).

2 residues coordinate Mn(2+): aspartate 14 and serine 64. The Phosphoserine intermediate role is filled by serine 64. Residues histidine 125, 155–156 (RD), arginine 187, arginine 193, 263–266 (RADR), and lysine 336 contribute to the substrate site. Mn(2+)-binding residues include aspartate 403, histidine 407, aspartate 444, histidine 445, and histidine 463.

Belongs to the BPG-independent phosphoglycerate mutase family. In terms of assembly, monomer. Requires Mn(2+) as cofactor.

The catalysed reaction is (2R)-2-phosphoglycerate = (2R)-3-phosphoglycerate. It participates in carbohydrate degradation; glycolysis; pyruvate from D-glyceraldehyde 3-phosphate: step 3/5. Functionally, catalyzes the interconversion of 2-phosphoglycerate and 3-phosphoglycerate. The protein is 2,3-bisphosphoglycerate-independent phosphoglycerate mutase of Salmonella paratyphi B (strain ATCC BAA-1250 / SPB7).